Reading from the N-terminus, the 328-residue chain is Ribosomal RNA large subunit methyltransferase F (328 aa).

The disordered stretch occupies residues 1 to 31 (MTDTRKPPRKKPQRPAKPAAPREKATLHPRN).

Belongs to the methyltransferase superfamily. METTL16/RlmF family.

Its subcellular location is the cytoplasm. It catalyses the reaction adenosine(1618) in 23S rRNA + S-adenosyl-L-methionine = N(6)-methyladenosine(1618) in 23S rRNA + S-adenosyl-L-homocysteine + H(+). Functionally, specifically methylates the adenine in position 1618 of 23S rRNA. The polypeptide is Ribosomal RNA large subunit methyltransferase F (Pseudomonas savastanoi pv. phaseolicola (strain 1448A / Race 6) (Pseudomonas syringae pv. phaseolicola (strain 1448A / Race 6))).